Here is a 130-residue protein sequence, read N- to C-terminus: Small ribosomal subunit protein uS8 (130 aa).

Belongs to the universal ribosomal protein uS8 family. As to quaternary structure, part of the 30S ribosomal subunit. Contacts proteins S5 and S12.

In terms of biological role, one of the primary rRNA binding proteins, it binds directly to 16S rRNA central domain where it helps coordinate assembly of the platform of the 30S subunit. The polypeptide is Small ribosomal subunit protein uS8 (Cereibacter sphaeroides (strain KD131 / KCTC 12085) (Rhodobacter sphaeroides)).